Consider the following 360-residue polypeptide: Holliday junction branch migration complex subunit RuvB (360 aa).

The interval 1–23 is disordered; it reads MIASVGDSRYYPKSVANGEKSDQ. Residues 12 to 204 form a large ATPase domain (RuvB-L) region; it reads PKSVANGEKS…FGIVLRLEFY (193 aa). ATP is bound by residues L43, R44, G85, K88, T89, T90, 151 to 153, R194, Y204, and R241; that span reads EDY. T89 lines the Mg(2+) pocket. The small ATPAse domain (RuvB-S) stretch occupies residues 205–275; sequence TTEDLKIILK…TAQKALEMLE (71 aa). The interval 278-360 is head domain (RuvB-H); the sequence is QHGFDEVDRR…KPPKKQDSLF (83 aa). Positions 333 and 338 each coordinate DNA.

The protein belongs to the RuvB family. In terms of assembly, homohexamer. Forms an RuvA(8)-RuvB(12)-Holliday junction (HJ) complex. HJ DNA is sandwiched between 2 RuvA tetramers; dsDNA enters through RuvA and exits via RuvB. An RuvB hexamer assembles on each DNA strand where it exits the tetramer. Each RuvB hexamer is contacted by two RuvA subunits (via domain III) on 2 adjacent RuvB subunits; this complex drives branch migration. In the full resolvosome a probable DNA-RuvA(4)-RuvB(12)-RuvC(2) complex forms which resolves the HJ.

The protein localises to the cytoplasm. The enzyme catalyses ATP + H2O = ADP + phosphate + H(+). Functionally, the RuvA-RuvB-RuvC complex processes Holliday junction (HJ) DNA during genetic recombination and DNA repair, while the RuvA-RuvB complex plays an important role in the rescue of blocked DNA replication forks via replication fork reversal (RFR). RuvA specifically binds to HJ cruciform DNA, conferring on it an open structure. The RuvB hexamer acts as an ATP-dependent pump, pulling dsDNA into and through the RuvAB complex. RuvB forms 2 homohexamers on either side of HJ DNA bound by 1 or 2 RuvA tetramers; 4 subunits per hexamer contact DNA at a time. Coordinated motions by a converter formed by DNA-disengaged RuvB subunits stimulates ATP hydrolysis and nucleotide exchange. Immobilization of the converter enables RuvB to convert the ATP-contained energy into a lever motion, pulling 2 nucleotides of DNA out of the RuvA tetramer per ATP hydrolyzed, thus driving DNA branch migration. The RuvB motors rotate together with the DNA substrate, which together with the progressing nucleotide cycle form the mechanistic basis for DNA recombination by continuous HJ branch migration. Branch migration allows RuvC to scan DNA until it finds its consensus sequence, where it cleaves and resolves cruciform DNA. This is Holliday junction branch migration complex subunit RuvB from Koribacter versatilis (strain Ellin345).